A 370-amino-acid polypeptide reads, in one-letter code: Cobalt-precorrin-5B C(1)-methyltransferase (370 aa).

Belongs to the CbiD family.

It catalyses the reaction Co-precorrin-5B + S-adenosyl-L-methionine = Co-precorrin-6A + S-adenosyl-L-homocysteine. It functions in the pathway cofactor biosynthesis; adenosylcobalamin biosynthesis; cob(II)yrinate a,c-diamide from sirohydrochlorin (anaerobic route): step 6/10. In terms of biological role, catalyzes the methylation of C-1 in cobalt-precorrin-5B to form cobalt-precorrin-6A. The protein is Cobalt-precorrin-5B C(1)-methyltransferase of Prochlorococcus marinus (strain MIT 9312).